The chain runs to 64 residues: Large ribosomal subunit protein bL28c (64 aa).

Belongs to the bacterial ribosomal protein bL28 family.

It localises to the plastid. The protein resides in the chloroplast. This chain is Large ribosomal subunit protein bL28c, found in Gracilaria tenuistipitata var. liui (Red alga).